A 202-amino-acid polypeptide reads, in one-letter code: Putative scarecrow-like protein 16 (202 aa).

Residues 1 to 26 (MQIPTLIDSMANKLHKKPPPLLKLTV) form a VHIID region. The GRAS domain occupies 1-202 (MQIPTLIDSM…RVERLEPKSR (202 aa)). Residues 45–82 (ELGSKLVNFATTRNVAMEFRIISSSYSDGLSSLIEQLR) form a leucine repeat II (LRII) region. Residues 92 to 184 (LVVNCHMMLH…EADISWKIDN (93 aa)) form a PFYRE region. An SAW region spans residues 187–202 (AKEGAERVERLEPKSR).

Belongs to the GRAS family. As to expression, expressed in seedlings, leaves and flowers.

Its subcellular location is the nucleus. Probable transcription factor involved in plant development. This chain is Putative scarecrow-like protein 16 (SCL16), found in Arabidopsis thaliana (Mouse-ear cress).